We begin with the raw amino-acid sequence, 261 residues long: Small ribosomal subunit protein uS2 (261 aa).

This sequence belongs to the universal ribosomal protein uS2 family.

The polypeptide is Small ribosomal subunit protein uS2 (Thermodesulfovibrio yellowstonii (strain ATCC 51303 / DSM 11347 / YP87)).